The chain runs to 207 residues: MATAADVDAEIQQALTNEVKLFNRWTYDDVTVTDISLVDYIGVQAAKHATFVPHTAGRYSVKRFRKAQCPIVERLTNSLMMHGRNNGKKLMAVRIVKHAMEIIHLLSDLNPIQVIIDAIVNSGPREDATRIGSAGVVRRQAVDISPLRRVNQAIFLITTGAREAAFRNIKTIAECLADELINAAKGSSNSYAIKKKDEIERVAKANR.

A2 carries the N-acetylalanine modification.

The protein belongs to the universal ribosomal protein uS7 family. Expressed in root tips, lateral root primordia, leaf primordia, shoot apical meristem and vasculature of cotyledons.

The polypeptide is Small ribosomal subunit protein uS7y (Arabidopsis thaliana (Mouse-ear cress)).